Reading from the N-terminus, the 238-residue chain is Probable transcriptional regulatory protein SGO_0454 (238 aa).

This sequence belongs to the TACO1 family. YeeN subfamily.

The protein resides in the cytoplasm. This chain is Probable transcriptional regulatory protein SGO_0454, found in Streptococcus gordonii (strain Challis / ATCC 35105 / BCRC 15272 / CH1 / DL1 / V288).